We begin with the raw amino-acid sequence, 197 residues long: MAKQITSICSFIFGASDKKSLPDESAPEIAFAGRSNVGKSSLINLLINSKKAARVSSKPGCTRQINFYSMYNDKFRIVDLPGYGYSCASKEEAVQYLNLIEYYLIHRRNLKRVFVLIDSKVGLKEIDKDFVYWLICNNINFNIVLTKIDKVNQESLNAILENTQKWVNNEHVSIHQISIRVKHKITKVRDEFFKFTR.

The region spanning 25–197 (SAPEIAFAGR…VRDEFFKFTR (173 aa)) is the EngB-type G domain. GTP-binding positions include 33–40 (GRSNVGKS), 60–64 (GCTRQ), 79–82 (DLPG), 146–149 (TKID), and 177–179 (ISI). Mg(2+)-binding residues include S40 and T62.

The protein belongs to the TRAFAC class TrmE-Era-EngA-EngB-Septin-like GTPase superfamily. EngB GTPase family. Mg(2+) is required as a cofactor.

Functionally, necessary for normal cell division and for the maintenance of normal septation. The chain is Probable GTP-binding protein EngB from Wolbachia pipientis subsp. Culex pipiens (strain wPip).